The sequence spans 152 residues: 3-dehydroquinate dehydratase (152 aa).

Tyrosine 25 serves as the catalytic Proton acceptor. The substrate site is built by asparagine 76, histidine 82, and aspartate 89. Histidine 102 serves as the catalytic Proton donor. Substrate contacts are provided by residues leucine 103 to serine 104 and arginine 113.

It belongs to the type-II 3-dehydroquinase family. As to quaternary structure, homododecamer.

It carries out the reaction 3-dehydroquinate = 3-dehydroshikimate + H2O. It functions in the pathway metabolic intermediate biosynthesis; chorismate biosynthesis; chorismate from D-erythrose 4-phosphate and phosphoenolpyruvate: step 3/7. Functionally, catalyzes a trans-dehydration via an enolate intermediate. The sequence is that of 3-dehydroquinate dehydratase from Gloeothece citriformis (strain PCC 7424) (Cyanothece sp. (strain PCC 7424)).